A 340-amino-acid chain; its full sequence is MKIISKKYRLELYSMLVDLLNDNIPLYDALNKIQNEGVGIYDKNFIKSIELIKDRMKSNSSLTDALTGLIPDKEVLMINVAENSGKISSGIAAIRKNIIDADEIKSKAISSMITPSVMLIVTMVVIAGYSVKVFPTFESVLPVSRWPGVTQALYNLGFSLYEGLWIKVLIFVAIFITILVFMSKNITGNFRDGFLDKLPPFNFVKHIAATEFLANMSMLLDSRVPFKEGLDIVDHKTTRWLSSHLQRMKANMQEGLDYKQALDTNLLDKKMLLTMAVYSELPNFSDVMQKLAIEANINLHKKIATLAGVMKNISLITLALSVIWIFGAIFSLVDKLSSSL.

Helical transmembrane passes span 108 to 131 (AISS…GYSV), 146 to 161 (WPGV…FSLY), and 312 to 333 (NISL…FSLV).

Belongs to the GSP F family.

It is found in the cell inner membrane. Its function is as follows. Probably involved in cholera toxin receptor (GM1) interaction in order to bring the cells within close proximity of the ganglioside for efficient toxin delivery. This is Toxin coregulated pilus biosynthesis protein E (tcpE) from Vibrio cholerae serotype O1 (strain ATCC 39315 / El Tor Inaba N16961).